The sequence spans 154 residues: uncharacterized protein (154 aa).

Residues 23–43 (SAVALVTFAGAALSGVIPAIA) form a helical membrane-spanning segment.

Its subcellular location is the membrane. This is an uncharacterized protein from Mycobacterium tuberculosis (strain CDC 1551 / Oshkosh).